The sequence spans 328 residues: DNA-directed RNA polymerase subunit alpha (328 aa).

The interval 1–235 is alpha N-terminal domain (alpha-NTD); the sequence is MQGSVTEFLK…EQLDAFVDLR (235 aa). Residues 249-328 are alpha C-terminal domain (alpha-CTD); that stretch reads FDPILLRPVD…ENWPPASLAE (80 aa).

It belongs to the RNA polymerase alpha chain family. In terms of assembly, homodimer. The RNAP catalytic core consists of 2 alpha, 1 beta, 1 beta' and 1 omega subunit. When a sigma factor is associated with the core the holoenzyme is formed, which can initiate transcription.

The catalysed reaction is RNA(n) + a ribonucleoside 5'-triphosphate = RNA(n+1) + diphosphate. In terms of biological role, DNA-dependent RNA polymerase catalyzes the transcription of DNA into RNA using the four ribonucleoside triphosphates as substrates. This is DNA-directed RNA polymerase subunit alpha from Pseudoalteromonas translucida (strain TAC 125).